Reading from the N-terminus, the 432-residue chain is Serine/threonine-protein phosphatase 2A activator 1 (432 aa).

Positions 322–432 (PYSKVEDEEP…MAPTKAPWAK (111 aa)) are disordered. Residues 366–389 (TVERLARRDGQRAAREKEEREDRA) are compositionally biased toward basic and acidic residues. Low complexity predominate over residues 396 to 412 (TTGAPGATALPPTRAPG).

The protein belongs to the PTPA-type PPIase family.

The protein resides in the cytoplasm. It is found in the nucleus. The enzyme catalyses [protein]-peptidylproline (omega=180) = [protein]-peptidylproline (omega=0). In terms of biological role, PPIases accelerate the folding of proteins. It catalyzes the cis-trans isomerization of proline imidic peptide bonds in oligopeptides. Acts as a regulatory subunit for PP2A-like phosphatases modulating their activity or substrate specificity, probably by inducing a conformational change in the catalytic subunit, a direct target of the PPIase. Can reactivate inactive phosphatase PP2A-phosphatase methylesterase complexes (PP2Ai) in presence of ATP and Mg(2+) by dissociating the inactive form from the complex. The chain is Serine/threonine-protein phosphatase 2A activator 1 (RRD1) from Yarrowia lipolytica (strain CLIB 122 / E 150) (Yeast).